A 559-amino-acid chain; its full sequence is MILKSSIDRLLQTIDIVEVISSYVNLRKSGSSYMACCPFHEERSASFSVNQIKGFYHCFGCGASGDSIKFVMAFEKLSFVEALEKLAHRFNIVLEYDKGVYYDHKEDYHLLEMVSSLYQEELFNAPFFLNYLQKRGLSLESIKAFKLGLCTNRIDYGIENKGLNKDKLIELGVLGKSDNDQKTYLRFLDRIMFPIYSPSAQVVGFGGRTLKEKAAKYINSPQSKLFDKSSLLYGYHLAKEHIYKQKQVIVTEGYLDVILLHQAGFKNAIATLGTALTPSHLPLLKKGDPEILLSYDGDKAGRNAAYKASLMLAKEQRRGGVILFENNLDPADMIANGQIETLKNWLSHPMAFIEFVLRRMADSYLLDDPLEKDKALKEMLGFLKNFSLLLQSEYKPLIATLLQAPLHVLGIRERVSFQPFYPKTEKPNRPQRFAHVSSAPSLEFLEKLVIRYLLEDRSLLDLAVGYIHSGVFLHKKQEFDALCQEKLDDPKLVALLLDANLPLKKGGFEKELRLLILRYFERQLKEIPKSSLPFSEKMICLKKARQAIMKLKQGELVAI.

The CHC2-type zinc finger occupies 37 to 61 (CPFHEERSASFSVNQIKGFYHCFGC). Residues 246-327 (KQVIVTEGYL…RGGVILFENN (82 aa)) enclose the Toprim domain. Mg(2+)-binding residues include glutamate 252, aspartate 296, and aspartate 298.

It belongs to the DnaG primase family. In terms of assembly, monomer. The C-terminal domain DnaB-binding domain exists as a dimer in solution. Interacts with DnaB via its C-terminal domain (residues 415-559 of DnaG); up to 3 DnaG fragments bind to a DnaB hexamer. The cofactor is Zn(2+). Mg(2+) is required as a cofactor.

It carries out the reaction ssDNA + n NTP = ssDNA/pppN(pN)n-1 hybrid + (n-1) diphosphate.. Functionally, RNA polymerase that catalyzes the synthesis of short RNA molecules used as primers for DNA polymerase during DNA replication. Stimulates the 5'-3' DNA helicase activity of DnaB. This chain is DNA primase, found in Helicobacter pylori (strain ATCC 700392 / 26695) (Campylobacter pylori).